We begin with the raw amino-acid sequence, 473 residues long: Mitochondrial distribution and morphology protein 10 (473 aa).

Belongs to the MDM10 family. In terms of assembly, component of the ER-mitochondria encounter structure (ERMES) or MDM complex, composed of MMM1, MDM10, MDM12 and MDM34. Associates with the mitochondrial outer membrane sorting assembly machinery SAM(core) complex.

The protein resides in the mitochondrion outer membrane. Component of the ERMES/MDM complex, which serves as a molecular tether to connect the endoplasmic reticulum and mitochondria. Components of this complex are involved in the control of mitochondrial shape and protein biogenesis and may function in phospholipid exchange. MDM10 is involved in the late assembly steps of the general translocase of the mitochondrial outer membrane (TOM complex). Functions in the TOM40-specific route of the assembly of outer membrane beta-barrel proteins, including the association of TOM40 with the receptor TOM22 and small TOM proteins. Can associate with the SAM(core) complex as well as the MDM12-MMM1 complex, both involved in late steps of the major beta-barrel assembly pathway, that is responsible for biogenesis of all outer membrane beta-barrel proteins. May act as a switch that shuttles between both complexes and channels precursor proteins into the TOM40-specific pathway. Plays a role in mitochondrial morphology and in the inheritance of mitochondria. This Candida albicans (strain SC5314 / ATCC MYA-2876) (Yeast) protein is Mitochondrial distribution and morphology protein 10.